The primary structure comprises 414 residues: Esterase FrsA (414 aa).

The protein belongs to the FrsA family.

It carries out the reaction a carboxylic ester + H2O = an alcohol + a carboxylate + H(+). Its function is as follows. Catalyzes the hydrolysis of esters. This is Esterase FrsA from Escherichia coli O127:H6 (strain E2348/69 / EPEC).